The following is a 231-amino-acid chain: GTP-binding protein RHO3 (231 aa).

23–30 provides a ligand contact to GTP; it reads GDGACGKT. Positions 45–53 match the Effector region motif; it reads YEPTVFENY. GTP is bound by residues 70–74 and 128–131; these read DTAGQ and LKCD. Over residues 139–150 the composition is skewed to polar residues; the sequence is SNAITPNNIQQD. Positions 139-165 are disordered; the sequence is SNAITPNNIQQDNSVSNDNGNNINSTS. Residues 151–165 show a composition bias toward low complexity; it reads NSVSNDNGNNINSTS. Position 228 is a cysteine methyl ester (cysteine 228). Cysteine 228 is lipidated: S-farnesyl cysteine. A propeptide spans 229 to 231 (removed in mature form); it reads TIM.

It belongs to the small GTPase superfamily. Rho family. In terms of assembly, interacts with TOS7.

The protein localises to the cell membrane. With respect to regulation, activity is positively regulated by the GTPase activating protein (GAP) RGD1. Functionally, plays an important role in cell growth. Required to keep the uninucleated state. Modulates morphogenesis during bud growth via directing organization of the actin cytoskeleton and the position of the secretory machinery for exocytosis. The sequence is that of GTP-binding protein RHO3 from Saccharomyces cerevisiae (strain ATCC 204508 / S288c) (Baker's yeast).